The sequence spans 506 residues: MAAMMASITSELLFFLPFILLALLTFYTTTVAKCHGGHWWRGGTTPAKRKRMNLPPGAAGWPLVGETFGYLRAHPATSVGRFMEQHIARYGKIYRSSLFGERTVVSADAGLNRYILQNEGRLFECSYPRSIGGILGKWSMLVLVGDPHREMRAISLNFLSSVRLRAVLLPEVERHTLLVLRAWPPSSTFSAQHQAKKFTFNLMAKNIMSMDPGEEETERLRREYITFMKGVVSAPLNLPGTPYWKALKSRAAILGVIERKMEERVEKLSKEDASVEQDDLLGWALKQSNLSKEQILDLLLSLLFAGHETSSMALALAIFFLEGCPKAVQELREEHLGIARRQRLRGECKLSWEDYKEMVFTQCVINETLRLGNVVRFLHRKVIKDVHYKGYDIPSGWKILPVLAAVHLDSSLYEDPQRFNPWRWKSSGSSGGLAQSSSFMPYGGGTRLCAGSELAKLEMAVFLHHLVLNFRWELAEPDQAFVFPFVDFPKGLPIRVHRIAQDDEQE.

Residues 12–32 traverse the membrane as a helical segment; sequence LLFFLPFILLALLTFYTTTVA. Cys-449 contacts heme.

Belongs to the cytochrome P450 family. Heme serves as cofactor. In terms of tissue distribution, highly expressed in roots and leaf blades. Expressed in shoot apex, stems, leaf sheaths, inflorescences and flowers.

The protein localises to the membrane. It catalyses the reaction a C28-steroid + reduced [NADPH--hemoprotein reductase] + O2 = a (22S)-22-hydroxy C28-steroid + oxidized [NADPH--hemoprotein reductase] + H2O + H(+). It carries out the reaction campesterol + reduced [NADPH--hemoprotein reductase] + O2 = (22S)-22-hydroxycampesterol + oxidized [NADPH--hemoprotein reductase] + H2O + H(+). The enzyme catalyses campestanol + reduced [NADPH--hemoprotein reductase] + O2 = 6-deoxycathasterone + oxidized [NADPH--hemoprotein reductase] + H2O + H(+). The protein operates within plant hormone biosynthesis; brassinosteroid biosynthesis. Its function is as follows. Catalyzes the C22-alpha-hydroxylation step in brassinosteroid biosynthesis, which is the rate-limiting step in this biosynthetic pathway. Catalyzes the conversion of campesterol (CR) to (22S)-22-hydroxycampesterol (22-OHCR, 22-hydroxyCR) and of campestanol (CN) to 6-deoxycathasterone (6-deoxoCT). Required for auxin responses involved in the regulation of epidermal cells length of the lamina joint. The chain is Steroid (22S)-hydroxylase from Oryza sativa subsp. japonica (Rice).